Consider the following 175-residue polypeptide: Ribulose bisphosphate carboxylase small subunit, chloroplastic (175 aa).

A chloroplast-targeting transit peptide spans 1–46 (MAPSVMASSATTVAPFQGLKSTAGMPVARRSGNSSFGNVSNGGRIR). An interaction with large subunit region spans residues 60–64 (ETLSY).

This sequence belongs to the RuBisCO small chain family. Heterohexadecamer of 8 large and 8 small subunits.

It localises to the plastid. The protein localises to the chloroplast. In terms of biological role, ruBisCO catalyzes two reactions: the carboxylation of D-ribulose 1,5-bisphosphate, the primary event in carbon dioxide fixation, as well as the oxidative fragmentation of the pentose substrate. Both reactions occur simultaneously and in competition at the same active site. Although the small subunit is not catalytic it is essential for maximal activity. This chain is Ribulose bisphosphate carboxylase small subunit, chloroplastic, found in Oryza sativa subsp. indica (Rice).